The chain runs to 280 residues: Phosphatidylglycerol--prolipoprotein diacylglyceryl transferase (280 aa).

Helical transmembrane passes span 30–50, 71–91, 106–126, and 132–152; these read WYGL…RRII, FLLW…ILFY, IWNG…AIII, and AIPL…GLFF. Arg154 lines the a 1,2-diacyl-sn-glycero-3-phospho-(1'-sn-glycerol) pocket. Helical transmembrane passes span 188 to 208, 217 to 237, and 251 to 271; these read QLYE…WFVY, GLVT…VEFF, and WLTM…WAIA.

The protein belongs to the Lgt family.

It localises to the cell inner membrane. The catalysed reaction is L-cysteinyl-[prolipoprotein] + a 1,2-diacyl-sn-glycero-3-phospho-(1'-sn-glycerol) = an S-1,2-diacyl-sn-glyceryl-L-cysteinyl-[prolipoprotein] + sn-glycerol 1-phosphate + H(+). The protein operates within protein modification; lipoprotein biosynthesis (diacylglyceryl transfer). Functionally, catalyzes the transfer of the diacylglyceryl group from phosphatidylglycerol to the sulfhydryl group of the N-terminal cysteine of a prolipoprotein, the first step in the formation of mature lipoproteins. The sequence is that of Phosphatidylglycerol--prolipoprotein diacylglyceryl transferase from Rhizobium meliloti (strain 1021) (Ensifer meliloti).